The primary structure comprises 204 residues: Auxin-binding protein 4 (204 aa).

A signal peptide spans 1 to 41; that stretch reads MVRRRPATGAAPRPHLAAVGRGLLLASVLAAAASSLPVAES. A disulfide bridge connects residues Cys-43 and Cys-196. Zn(2+) is bound by residues His-98, His-100, and Glu-104. An N-linked (GlcNAc...) asparagine glycan is attached at Asn-136. Residue His-147 coordinates Zn(2+). Positions 201 to 204 match the Prevents secretion from ER motif; the sequence is KDEL.

In terms of assembly, homodimer.

The protein localises to the endoplasmic reticulum lumen. This is probably a receptor for the plant hormone auxin. The sequence is that of Auxin-binding protein 4 (ABP4) from Zea mays (Maize).